The sequence spans 277 residues: Undecaprenyl-diphosphatase (277 aa).

The next 6 membrane-spanning stretches (helical) occupy residues 44 to 64 (RAMA…VWEF), 86 to 106 (GNLL…ADLI), 110 to 130 (LFNP…MLWA), 184 to 204 (AATE…AVYS), 215 to 235 (GDLP…MIAV), and 250 to 270 (FAWY…FGWV).

Belongs to the UppP family.

Its subcellular location is the cell inner membrane. The enzyme catalyses di-trans,octa-cis-undecaprenyl diphosphate + H2O = di-trans,octa-cis-undecaprenyl phosphate + phosphate + H(+). Catalyzes the dephosphorylation of undecaprenyl diphosphate (UPP). Confers resistance to bacitracin. The chain is Undecaprenyl-diphosphatase from Pseudomonas putida (strain ATCC 47054 / DSM 6125 / CFBP 8728 / NCIMB 11950 / KT2440).